We begin with the raw amino-acid sequence, 154 residues long: uncharacterized protein (154 aa).

The transit peptide at 1-42 (MLRVIWKHSSRVTRSIELSNISTTNHTRSLRRLSWISPRRFY) directs the protein to the mitochondrion.

The protein resides in the mitochondrion. This is an uncharacterized protein from Saccharomyces cerevisiae (strain ATCC 204508 / S288c) (Baker's yeast).